The following is a 212-amino-acid chain: RNA chaperone ProQ (212 aa).

Residues 107–153 are disordered; it reads QDKAKAKRVAQAKSANPAAKTAKKPVKKPVAKRPKPAQSSKPAKEPV. The span at 117 to 126 shows a compositional bias: low complexity; the sequence is QAKSANPAAK. The segment covering 127–141 has biased composition (basic residues); it reads TAKKPVKKPVAKRPK.

The protein belongs to the ProQ family.

The protein localises to the cytoplasm. RNA chaperone with significant RNA binding, RNA strand exchange and RNA duplexing activities. The chain is RNA chaperone ProQ from Shewanella pealeana (strain ATCC 700345 / ANG-SQ1).